Here is a 510-residue protein sequence, read N- to C-terminus: Glycerol kinase (510 aa).

Position 13 (T13) interacts with ADP. Residues T13 and T14 each coordinate ATP. T13 contacts sn-glycerol 3-phosphate. R17 provides a ligand contact to ADP. Sn-glycerol 3-phosphate contacts are provided by R83, E84, Y135, and D255. The glycerol site is built by R83, E84, Y135, D255, and Q256. Positions 277, 321, 421, and 425 each coordinate ADP. Residues T277, G321, and G421 each coordinate ATP.

This sequence belongs to the FGGY kinase family.

The catalysed reaction is glycerol + ATP = sn-glycerol 3-phosphate + ADP + H(+). Its pathway is polyol metabolism; glycerol degradation via glycerol kinase pathway; sn-glycerol 3-phosphate from glycerol: step 1/1. Its function is as follows. Key enzyme in the regulation of glycerol uptake and metabolism. Catalyzes the phosphorylation of glycerol to yield sn-glycerol 3-phosphate. This chain is Glycerol kinase, found in Halobacterium salinarum (strain ATCC 29341 / DSM 671 / R1).